The chain runs to 176 residues: Ribosome maturation factor RimM (176 aa).

Residues 103 to 176 (QNDEYYFYEI…KIVVKELEWI (74 aa)) enclose the PRC barrel domain.

Belongs to the RimM family. In terms of assembly, binds ribosomal protein uS19.

The protein resides in the cytoplasm. An accessory protein needed during the final step in the assembly of 30S ribosomal subunit, possibly for assembly of the head region. Essential for efficient processing of 16S rRNA. May be needed both before and after RbfA during the maturation of 16S rRNA. It has affinity for free ribosomal 30S subunits but not for 70S ribosomes. The protein is Ribosome maturation factor RimM of Thermotoga neapolitana (strain ATCC 49049 / DSM 4359 / NBRC 107923 / NS-E).